A 557-amino-acid chain; its full sequence is Potassium-transporting ATPase potassium-binding subunit (557 aa).

12 helical membrane passes run 5–25, 63–83, 132–152, 170–190, 253–273, 283–303, 329–349, 356–376, 379–399, 416–436, 484–504, and 526–546; these read GFLLIATFLLVLMVLARPLGS, LCAILGLNMLGLAVLFFMLLG, GLTVQNFLSAASGIAVIFALI, LLRITLWVLVPVALVIALFFI, FVQMLAIFLIPTALCFAFGEV, LLWAMSVIFVICVGVVMWAEV, VLVSSLFAVVTTAASCGAVIA, ALGGMVPMWLMQIGEVVFGGV, GLYGMMLFVLLAVFIAGLMIG, LTALAILVTPTLVLMGAALAM, LLAFCMFVGRFGVIIPVMAIA, and LFVGLLIGTVLLVGALTFIPA.

It belongs to the KdpA family. As to quaternary structure, the system is composed of three essential subunits: KdpA, KdpB and KdpC.

Its subcellular location is the cell inner membrane. Part of the high-affinity ATP-driven potassium transport (or Kdp) system, which catalyzes the hydrolysis of ATP coupled with the electrogenic transport of potassium into the cytoplasm. This subunit binds the periplasmic potassium ions and delivers the ions to the membrane domain of KdpB through an intramembrane tunnel. The protein is Potassium-transporting ATPase potassium-binding subunit of Escherichia coli O157:H7.